The primary structure comprises 134 residues: Prefoldin subunit 4 (134 aa).

N-acetylalanine is present on alanine 2. Phosphoserine is present on serine 125.

Belongs to the prefoldin subunit beta family. Heterohexamer of two PFD-alpha type and four PFD-beta type subunits. Interacts with URI1; the interaction is phosphorylation-dependent and occurs in a growth-dependent manner.

It is found in the nucleus. Its subcellular location is the cytoplasm. It localises to the mitochondrion. In terms of biological role, binds specifically to cytosolic chaperonin (c-CPN) and transfers target proteins to it. Binds to nascent polypeptide chain and promotes folding in an environment in which there are many competing pathways for nonnative proteins. The protein is Prefoldin subunit 4 (PFDN4) of Homo sapiens (Human).